Reading from the N-terminus, the 229-residue chain is Uracil-DNA glycosylase (229 aa).

The active-site Proton acceptor is D67.

The protein belongs to the uracil-DNA glycosylase (UDG) superfamily. UNG family.

The protein resides in the cytoplasm. It carries out the reaction Hydrolyzes single-stranded DNA or mismatched double-stranded DNA and polynucleotides, releasing free uracil.. Its function is as follows. Excises uracil residues from the DNA which can arise as a result of misincorporation of dUMP residues by DNA polymerase or due to deamination of cytosine. The sequence is that of Uracil-DNA glycosylase from Coxiella burnetii (strain RSA 493 / Nine Mile phase I).